The following is a 620-amino-acid chain: Chaperone protein HscA homolog (620 aa).

Belongs to the heat shock protein 70 family.

Functionally, chaperone involved in the maturation of iron-sulfur cluster-containing proteins. Has a low intrinsic ATPase activity which is markedly stimulated by HscB. The protein is Chaperone protein HscA homolog of Bordetella petrii (strain ATCC BAA-461 / DSM 12804 / CCUG 43448).